We begin with the raw amino-acid sequence, 336 residues long: TBC1 domain family member 21 (336 aa).

Residues 57-265 (GLHPFVRTEA…RLWEVLLTGK (209 aa)) enclose the Rab-GAP TBC domain.

As to quaternary structure, interacts with ACTB. Interacts with ARMC12, TOMM20, DNAH7 and RAP1A. Interacts with RAB10. In terms of tissue distribution, expressed in round and elongated spermatids (at protein level). Expressed specifically in adult testis and very weakly in fetal brain.

The protein resides in the cytoplasmic vesicle. It is found in the secretory vesicle. It localises to the acrosome. Its subcellular location is the cytoplasm. The protein localises to the cytoskeleton. In terms of biological role, acts as a GTPase-activating protein for Rab family protein(s). Essential for the establishment of male fertility, and is required for both the production of normal sperm number and sperm function. Plays an important role in the formation of intact mitochondria, outer dense fibers and axoneme within the sperm tail. Essential for sperm mitochondrial sheath formation and for the interactions of ARMC12 with VDAC2 and VDAC3. May be involved in acrosome formation and cytoskeletal reorganization during spermiogenesis, possibly by regulating RAB3A activity. The sequence is that of TBC1 domain family member 21 (TBC1D21) from Homo sapiens (Human).